An 84-amino-acid chain; its full sequence is ATP synthase subunit c (84 aa).

Transmembrane regions (helical) follow at residues 9-29 (IIGA…GFAI) and 54-74 (IVAG…LLFI).

Belongs to the ATPase C chain family. F-type ATPases have 2 components, F(1) - the catalytic core - and F(0) - the membrane proton channel. F(1) has five subunits: alpha(3), beta(3), gamma(1), delta(1), epsilon(1). F(0) has three main subunits: a(1), b(2) and c(10-14). The alpha and beta chains form an alternating ring which encloses part of the gamma chain. F(1) is attached to F(0) by a central stalk formed by the gamma and epsilon chains, while a peripheral stalk is formed by the delta and b chains.

The protein resides in the cell inner membrane. In terms of biological role, f(1)F(0) ATP synthase produces ATP from ADP in the presence of a proton or sodium gradient. F-type ATPases consist of two structural domains, F(1) containing the extramembraneous catalytic core and F(0) containing the membrane proton channel, linked together by a central stalk and a peripheral stalk. During catalysis, ATP synthesis in the catalytic domain of F(1) is coupled via a rotary mechanism of the central stalk subunits to proton translocation. Functionally, key component of the F(0) channel; it plays a direct role in translocation across the membrane. A homomeric c-ring of between 10-14 subunits forms the central stalk rotor element with the F(1) delta and epsilon subunits. This chain is ATP synthase subunit c, found in Haemophilus influenzae (strain ATCC 51907 / DSM 11121 / KW20 / Rd).